The sequence spans 319 residues: Malate dehydrogenase (319 aa).

NAD(+)-binding positions include 7 to 13 (GAAGGIG) and aspartate 34. Substrate-binding residues include arginine 81 and arginine 87. Residues asparagine 94 and 117–119 (ITN) each bind NAD(+). Positions 119 and 153 each coordinate substrate. The active-site Proton acceptor is histidine 177. Methionine 227 serves as a coordination point for NAD(+).

This sequence belongs to the LDH/MDH superfamily. MDH type 1 family. As to quaternary structure, homodimer.

It carries out the reaction (S)-malate + NAD(+) = oxaloacetate + NADH + H(+). In terms of biological role, catalyzes the reversible oxidation of malate to oxaloacetate. This is Malate dehydrogenase from Psychromonas ingrahamii (strain DSM 17664 / CCUG 51855 / 37).